The primary structure comprises 484 residues: Zinc metalloproteinase-disintegrin BlatH1 (484 aa).

The signal sequence occupies residues 1–20 (MIQVLLVTICLAALPYQGSS). Positions 21–190 (IILESGNVND…KKASQSNLTP (170 aa)) are excised as a propeptide. Glu191 carries the pyrrolidone carboxylic acid (Glu) modification. In terms of domain architecture, Peptidase M12B spans 199 to 395 (KYVELVIVAD…QNSQCILNEP (197 aa)). Residue Glu202 participates in Ca(2+) binding. An N-linked (GlcNAc...) asparagine glycan is attached at Asn259. Asp286 is a binding site for Ca(2+). An N-linked (GlcNAc...) asparagine glycan is attached at Asn297. Disulfide bonds link Cys310–Cys390, Cys350–Cys374, and Cys352–Cys357. His335 is a binding site for Zn(2+). Glu336 is an active-site residue. His339 and His345 together coordinate Zn(2+). The N-linked (GlcNAc...) asparagine glycan is linked to Asn373. Cys390, Asn393, Val405, Asn408, Glu412, Glu415, and Asp418 together coordinate Ca(2+). Residues 403 to 484 (PPVCGNEILE…GQSADCPSNG (82 aa)) enclose the Disintegrin domain. Intrachain disulfides connect Cys406–Cys425, Cys417–Cys435, Cys419–Cys430, Cys429–Cys452, Cys443–Cys449, Cys448–Cys473, and Cys461–Cys480. The TDN-tripeptide signature appears at 465–467 (TDN).

Belongs to the venom metalloproteinase (M12B) family. P-II subfamily. P-IIc sub-subfamily. In terms of assembly, homodimer. It depends on Zn(2+) as a cofactor. In terms of processing, the N-terminus is blocked. In terms of tissue distribution, expressed by the venom gland.

It localises to the secreted. Its activity is regulated as follows. Platelet aggregation in inhibited by the metalloproteinase inhibitors EDTA and Batimastat. The hemorrhagic activity is not inhibited by the plasma proteinase inhibitor alpha2-macroglobulin, although the SVMP is able to cleave this plasma inhibitor, generating a 90 kDa product. In terms of biological role, snake venom zinc metalloprotease-disintegrin that hydrolyzes azocasein, gelatin and fibrinogen (Aalpha and Bbeta chains and partially gamma-chain), and exerts a potent local and systemic hemorrhagic activity in mice. It inhibits ADP- and collagen-induced human platelet aggregation (IC(50) = 0.3 uM and 0.7 uM for ADP and collagen, respectively). This inhibition is dependent of protease activity, and probably occurs through the degradation of an unknown platelet receptor. The polypeptide is Zinc metalloproteinase-disintegrin BlatH1 (Bothriechis lateralis (Side-striped palm pitviper)).